Consider the following 960-residue polypeptide: Testis anion transporter 1 (960 aa).

Topologically, residues M1–D93 are cytoplasmic. A helical transmembrane segment spans residues L94–L114. At A115–H117 the chain is on the extracellular side. A helical transmembrane segment spans residues L118 to F138. G139 is a topological domain (cytoplasmic). The helical transmembrane segment at S140 to L160 threads the bilayer. The Extracellular portion of the chain corresponds to R161 to L201. Residue N190 is glycosylated (N-linked (GlcNAc...) asparagine). The next 2 membrane-spanning stretches (helical) occupy residues L202–I222 and P223–L243. At T244–C268 the chain is on the cytoplasmic side. The helical transmembrane segment at L269–L289 threads the bilayer. At R290–T353 the chain is on the extracellular side. A helical transmembrane segment spans residues E354 to G374. Residues K375–D390 are Cytoplasmic-facing. A helical transmembrane segment spans residues L391–G411. The Extracellular segment spans residues A412–Q427. Residues F428–F448 form a helical membrane-spanning segment. The Cytoplasmic segment spans residues Y449–N453. The helical transmembrane segment at A454–L474 threads the bilayer. At P475–S494 the chain is on the extracellular side. The helical transmembrane segment at A495 to I515 threads the bilayer. The Cytoplasmic portion of the chain corresponds to T516–I960. The region spanning D541–A792 is the STAS domain. Positions I662–A957 are interaction with RACGAP1. Disordered regions lie at residues E807–D857 and E881–I960. Residues E818–H827 are compositionally biased toward basic and acidic residues. Residues P884 to P904 are compositionally biased toward acidic residues. Polar residues predominate over residues S926–Q935.

It belongs to the SLC26A/SulP transporter (TC 2.A.53) family. In terms of assembly, interacts with RACGAP1. Interacts with CFTR; stimulates anion transport activity of CFTR. In terms of processing, N-glycosylated.

The protein resides in the membrane. It catalyses the reaction sulfate(out) + chloride(in) = sulfate(in) + chloride(out). The catalysed reaction is oxalate(in) + chloride(out) = oxalate(out) + chloride(in). Its function is as follows. Antiporter that mediates the exchange of sulfate and oxalate against chloride ions across a membrane. Stimulates anion transport activity of CFTR. May cooperate with CFTR in the regulation of chloride and bicarbonate ions fluxes required for activation of the ADCY10/PKA pathway during sperm motility and sperm capacitation. May play a role in sperm tail differentiation and motility and hence male fertility. This is Testis anion transporter 1 from Bos taurus (Bovine).